Reading from the N-terminus, the 257-residue chain is 1-(5-phosphoribosyl)-5-[(5-phosphoribosylamino)methylideneamino] imidazole-4-carboxamide isomerase (257 aa).

The Proton acceptor role is filled by aspartate 8. Aspartate 130 functions as the Proton donor in the catalytic mechanism.

This sequence belongs to the HisA/HisF family.

Its subcellular location is the cytoplasm. It carries out the reaction 1-(5-phospho-beta-D-ribosyl)-5-[(5-phospho-beta-D-ribosylamino)methylideneamino]imidazole-4-carboxamide = 5-[(5-phospho-1-deoxy-D-ribulos-1-ylimino)methylamino]-1-(5-phospho-beta-D-ribosyl)imidazole-4-carboxamide. The protein operates within amino-acid biosynthesis; L-histidine biosynthesis; L-histidine from 5-phospho-alpha-D-ribose 1-diphosphate: step 4/9. This Chlorobium chlorochromatii (strain CaD3) protein is 1-(5-phosphoribosyl)-5-[(5-phosphoribosylamino)methylideneamino] imidazole-4-carboxamide isomerase.